A 61-amino-acid polypeptide reads, in one-letter code: Small ribosomal subunit protein uS14 (61 aa).

Cys-24, Cys-27, Cys-40, and Cys-43 together coordinate Zn(2+).

Belongs to the universal ribosomal protein uS14 family. Zinc-binding uS14 subfamily. As to quaternary structure, part of the 30S ribosomal subunit. Contacts proteins S3 and S10. The cofactor is Zn(2+).

Binds 16S rRNA, required for the assembly of 30S particles and may also be responsible for determining the conformation of the 16S rRNA at the A site. In Mesomycoplasma hyopneumoniae (strain 232) (Mycoplasma hyopneumoniae), this protein is Small ribosomal subunit protein uS14.